Reading from the N-terminus, the 213-residue chain is Ribosomal RNA small subunit methyltransferase G (213 aa).

Residues glycine 83, leucine 88, 132-133 (IE), and arginine 146 each bind S-adenosyl-L-methionine.

This sequence belongs to the methyltransferase superfamily. RNA methyltransferase RsmG family.

The protein resides in the cytoplasm. The enzyme catalyses guanosine(527) in 16S rRNA + S-adenosyl-L-methionine = N(7)-methylguanosine(527) in 16S rRNA + S-adenosyl-L-homocysteine. Specifically methylates the N7 position of guanine in position 527 of 16S rRNA. In Granulibacter bethesdensis (strain ATCC BAA-1260 / CGDNIH1), this protein is Ribosomal RNA small subunit methyltransferase G.